The following is a 316-amino-acid chain: Fe-S cluster assembly protein dre2 (316 aa).

The interval 1 to 128 (MAPRCLLIGT…KPEQEEPVSI (128 aa)) is N-terminal SAM-like domain. The interval 129-208 (PLKFGKNKAN…EDDLITEADM (80 aa)) is linker. Positions 141–177 (SATNGTNGAVNPDGSVPLNLNRKRDQPEPVKPAGVGF) are disordered. [2Fe-2S] cluster-binding residues include C218, C229, C232, and C234. The segment at 218 to 234 (CQPKPGKRRRACKDCTC) is fe-S binding site A. Residues C279, C282, C290, and C293 each contribute to the [4Fe-4S] cluster site. 2 short sequence motifs (cx2C motif) span residues 279 to 282 (CGNC) and 290 to 293 (CDGC). A fe-S binding site B region spans residues 279–293 (CGNCALGDAFRCDGC).

Belongs to the anamorsin family. As to quaternary structure, monomer. Interacts with TAH18. Interacts with MIA40. It depends on [2Fe-2S] cluster as a cofactor. [4Fe-4S] cluster serves as cofactor.

The protein localises to the cytoplasm. It localises to the mitochondrion intermembrane space. Functionally, component of the cytosolic iron-sulfur (Fe-S) protein assembly (CIA) machinery required for the maturation of extramitochondrial Fe-S proteins. Part of an electron transfer chain functioning in an early step of cytosolic Fe-S biogenesis, facilitating the de novo assembly of a [4Fe-4S] cluster on the scaffold complex CFD1-NBP35. Electrons are transferred to DRE2 from NADPH via the FAD- and FMN-containing protein TAH18. TAH18-DRE2 are also required for the assembly of the diferric tyrosyl radical cofactor of ribonucleotide reductase (RNR), probably by providing electrons for reduction during radical cofactor maturation in the catalytic small subunit RNR2. The polypeptide is Fe-S cluster assembly protein dre2 (Pyrenophora tritici-repentis (strain Pt-1C-BFP) (Wheat tan spot fungus)).